A 239-amino-acid polypeptide reads, in one-letter code: LexA repressor (239 aa).

A disordered region spans residues 1–40; sequence MTEAATGPEGADPSRAARSLPGRPPGIRADSSGLTDRQRR. The H-T-H motif DNA-binding region spans 58 to 78; that stretch reads MREIGQAVGLSSTSSVAHQLM. Residues 89–100 show a composition bias toward basic and acidic residues; it reads DPHRPRAYEVRG. Residues 89-116 are disordered; it reads DPHRPRAYEVRGSDQPSAQPADTSGKPA. Catalysis depends on for autocatalytic cleavage activity residues Ser-163 and Lys-200.

Belongs to the peptidase S24 family. As to quaternary structure, homodimer.

It catalyses the reaction Hydrolysis of Ala-|-Gly bond in repressor LexA.. Its function is as follows. Represses a number of genes involved in the response to DNA damage (SOS response), including recA and lexA. In the presence of single-stranded DNA, RecA interacts with LexA causing an autocatalytic cleavage which disrupts the DNA-binding part of LexA, leading to derepression of the SOS regulon and eventually DNA repair. In Streptomyces clavuligerus, this protein is LexA repressor.